A 174-amino-acid chain; its full sequence is Soma ferritin (174 aa).

One can recognise a Ferritin-like diiron domain in the interval 8–157 (QNYHAESEAG…DYITNLKRVG (150 aa)). Fe cation is bound by residues Glu25, Glu60, His63, Glu105, and Gln139.

It belongs to the ferritin family. In terms of assembly, oligomer of 12 or 24 subunits. The functional molecule is roughly spherical and contains a central cavity into which the polymeric mineral iron core is deposited. As to expression, expressed in somatic tissues but not in oocytes.

It is found in the cytoplasm. The enzyme catalyses 4 Fe(2+) + O2 + 4 H(+) = 4 Fe(3+) + 2 H2O. Stores iron in a soluble, non-toxic, readily available form. Important for iron homeostasis. Has ferroxidase activity. Iron is taken up in the ferrous form and deposited as ferric hydroxides after oxidation. The polypeptide is Soma ferritin (Lymnaea stagnalis (Great pond snail)).